Here is a 286-residue protein sequence, read N- to C-terminus: tRNA pseudouridine synthase A (286 aa).

Aspartate 60 serves as the catalytic Nucleophile. Residue tyrosine 132 participates in substrate binding.

It belongs to the tRNA pseudouridine synthase TruA family. In terms of assembly, homodimer.

The enzyme catalyses uridine(38/39/40) in tRNA = pseudouridine(38/39/40) in tRNA. In terms of biological role, formation of pseudouridine at positions 38, 39 and 40 in the anticodon stem and loop of transfer RNAs. In Mycobacterium leprae (strain TN), this protein is tRNA pseudouridine synthase A.